A 299-amino-acid polypeptide reads, in one-letter code: GTPase Era (299 aa).

In terms of domain architecture, Era-type G spans 9–177 (RSGSVAVIGR…VGDLLKLVPE (169 aa)). The tract at residues 17 to 24 (GRPNVGKS) is G1. Residue 17–24 (GRPNVGKS) participates in GTP binding. Residues 43–47 (QTTRH) form a G2 region. Residues 64–67 (DTPG) are G3. GTP contacts are provided by residues 64-68 (DTPGL) and 126-129 (NKVD). The G4 stretch occupies residues 126–129 (NKVD). The G5 stretch occupies residues 156–158 (VSA). Positions 200 to 284 (VREQLMRQLG…FLETWVRVRE (85 aa)) constitute a KH type-2 domain.

This sequence belongs to the TRAFAC class TrmE-Era-EngA-EngB-Septin-like GTPase superfamily. Era GTPase family. In terms of assembly, monomer.

It localises to the cytoplasm. Its subcellular location is the cell inner membrane. An essential GTPase that binds both GDP and GTP, with rapid nucleotide exchange. Plays a role in 16S rRNA processing and 30S ribosomal subunit biogenesis and possibly also in cell cycle regulation and energy metabolism. In Xanthomonas oryzae pv. oryzae (strain MAFF 311018), this protein is GTPase Era.